The sequence spans 194 residues: Imidazoleglycerol-phosphate dehydratase (194 aa).

The protein belongs to the imidazoleglycerol-phosphate dehydratase family.

The protein resides in the cytoplasm. The enzyme catalyses D-erythro-1-(imidazol-4-yl)glycerol 3-phosphate = 3-(imidazol-4-yl)-2-oxopropyl phosphate + H2O. It participates in amino-acid biosynthesis; L-histidine biosynthesis; L-histidine from 5-phospho-alpha-D-ribose 1-diphosphate: step 6/9. In Methanothermobacter thermautotrophicus (strain ATCC 29096 / DSM 1053 / JCM 10044 / NBRC 100330 / Delta H) (Methanobacterium thermoautotrophicum), this protein is Imidazoleglycerol-phosphate dehydratase.